Consider the following 321-residue polypeptide: Beta-ketoacyl-[acyl-carrier-protein] synthase III (321 aa).

Catalysis depends on residues Cys-115 and His-248. An ACP-binding region spans residues 249-253; it reads QANIR. Residue Asn-278 is part of the active site.

The protein belongs to the thiolase-like superfamily. FabH family. As to quaternary structure, homodimer.

The protein resides in the cytoplasm. The enzyme catalyses malonyl-[ACP] + acetyl-CoA + H(+) = 3-oxobutanoyl-[ACP] + CO2 + CoA. It functions in the pathway lipid metabolism; fatty acid biosynthesis. Catalyzes the condensation reaction of fatty acid synthesis by the addition to an acyl acceptor of two carbons from malonyl-ACP. Catalyzes the first condensation reaction which initiates fatty acid synthesis and may therefore play a role in governing the total rate of fatty acid production. Possesses both acetoacetyl-ACP synthase and acetyl transacylase activities. Its substrate specificity determines the biosynthesis of branched-chain and/or straight-chain of fatty acids. This Aromatoleum aromaticum (strain DSM 19018 / LMG 30748 / EbN1) (Azoarcus sp. (strain EbN1)) protein is Beta-ketoacyl-[acyl-carrier-protein] synthase III.